The following is a 142-amino-acid chain: Photosystem II extrinsic protein U (142 aa).

An N-terminal signal peptide occupies residues 1 to 29 (MKGLVRLLTVFSLLLGCWGWLGTTQIAQA).

The protein belongs to the PsbU family. In terms of assembly, PSII is composed of 1 copy each of membrane proteins PsbA, PsbB, PsbC, PsbD, PsbE, PsbF, PsbH, PsbI, PsbJ, PsbK, PsbL, PsbM, PsbT, PsbX, PsbY, PsbZ, Psb30/Ycf12, peripheral proteins PsbO, CyanoQ (PsbQ), PsbU, PsbV and a large number of cofactors. It forms dimeric complexes.

The protein localises to the cellular thylakoid membrane. One of the extrinsic, lumenal subunits of photosystem II (PSII). PSII is a light-driven water plastoquinone oxidoreductase, using light energy to abstract electrons from H(2)O, generating a proton gradient subsequently used for ATP formation. The extrinsic proteins stabilize the structure of photosystem II oxygen-evolving complex (OEC), the ion environment of oxygen evolution and protect the OEC against heat-induced inactivation. The chain is Photosystem II extrinsic protein U from Nostoc sp. (strain PCC 7120 / SAG 25.82 / UTEX 2576).